Consider the following 295-residue polypeptide: MTNVTGTERVKRGMAEMQKGGVIMDVVNAEQAKIAEEAGAVAVMALERVPADIRAAGGVARMADPTIVEEVMGAVSIPVMAKCRIGHLVEARVLESLGVDYIDESEVLTPADEVNHLNKRDYTVPFVCGCRDIGEAARRIAEGASMLRTKGEPGTGNIVEAVRHMRQVNAEIRQVANLREDELMTYAKNTGAPYEVLLEIKRLGRLPVVNFAAGGVATPADAALMMQLGADGVFVGSGIFKSENPEKFARAIVEATTHYEDYELIANLSKGLGDAMKGVEISTLLPEQRMQERGW.

D25 contributes to the D-ribose 5-phosphate binding site. Catalysis depends on K82, which acts as the Schiff-base intermediate with D-ribose 5-phosphate. G154 is a D-ribose 5-phosphate binding site. R166 contributes to the D-glyceraldehyde 3-phosphate binding site. Residues G215 and 236–237 each bind D-ribose 5-phosphate; that span reads GS.

It belongs to the PdxS/SNZ family. In the presence of PdxT, forms a dodecamer of heterodimers.

It catalyses the reaction aldehydo-D-ribose 5-phosphate + D-glyceraldehyde 3-phosphate + L-glutamine = pyridoxal 5'-phosphate + L-glutamate + phosphate + 3 H2O + H(+). The protein operates within cofactor biosynthesis; pyridoxal 5'-phosphate biosynthesis. Catalyzes the formation of pyridoxal 5'-phosphate from ribose 5-phosphate (RBP), glyceraldehyde 3-phosphate (G3P) and ammonia. The ammonia is provided by the PdxT subunit. Can also use ribulose 5-phosphate and dihydroxyacetone phosphate as substrates, resulting from enzyme-catalyzed isomerization of RBP and G3P, respectively. This Bacillus cytotoxicus (strain DSM 22905 / CIP 110041 / 391-98 / NVH 391-98) protein is Pyridoxal 5'-phosphate synthase subunit PdxS.